The chain runs to 259 residues: Adenylate kinase (259 aa).

Residue 52–57 participates in ATP binding; the sequence is GAGKGT. The NMP stretch occupies residues 72-101; that stretch reads ATGDMLRSQVAKKTDLGREAKKIMDQGGLV. AMP-binding positions include threonine 73, arginine 78, 99–101, 128–131, and glutamine 135; these read GLV and GFPR. Positions 169 to 206 are LID; that stretch reads GRLVHPASGRSYHKIFNPPKEAMKDDITGEPLVQRSDD. ATP-binding positions include arginine 170 and 179–180; that span reads SY. AMP-binding residues include arginine 203 and arginine 214. Glutamine 242 is a binding site for ATP.

It belongs to the adenylate kinase family. AK2 subfamily. As to quaternary structure, monomer.

It is found in the cytoplasm. The protein resides in the mitochondrion intermembrane space. It carries out the reaction AMP + ATP = 2 ADP. In terms of biological role, catalyzes the reversible transfer of the terminal phosphate group between ATP and AMP. Plays an important role in cellular energy homeostasis and in adenine nucleotide metabolism. Adenylate kinase activity is critical for regulation of the phosphate utilization and the AMP de novo biosynthesis pathways. The sequence is that of Adenylate kinase (adk1) from Emericella nidulans (strain FGSC A4 / ATCC 38163 / CBS 112.46 / NRRL 194 / M139) (Aspergillus nidulans).